Consider the following 338-residue polypeptide: Phenylalanine--tRNA ligase alpha subunit (338 aa).

Position 253 (glutamate 253) interacts with Mg(2+).

The protein belongs to the class-II aminoacyl-tRNA synthetase family. Phe-tRNA synthetase alpha subunit type 1 subfamily. In terms of assembly, tetramer of two alpha and two beta subunits. The cofactor is Mg(2+).

It is found in the cytoplasm. It carries out the reaction tRNA(Phe) + L-phenylalanine + ATP = L-phenylalanyl-tRNA(Phe) + AMP + diphosphate + H(+). This Citrifermentans bemidjiense (strain ATCC BAA-1014 / DSM 16622 / JCM 12645 / Bem) (Geobacter bemidjiensis) protein is Phenylalanine--tRNA ligase alpha subunit.